The chain runs to 413 residues: NAD-dependent dihydropyrimidine dehydrogenase subunit PreT (413 aa).

Glu287 contacts NAD(+).

It belongs to the NADH dehydrogenase family. As to quaternary structure, heterotetramer of 2 PreA and 2 PreT subunits.

It catalyses the reaction 5,6-dihydrouracil + NAD(+) = uracil + NADH + H(+). It carries out the reaction 5,6-dihydrothymine + NAD(+) = thymine + NADH + H(+). Its function is as follows. Involved in pyrimidine base degradation. Catalyzes physiologically the reduction of uracil to 5,6-dihydrouracil (DHU) by using NADH as a specific cosubstrate. It also catalyzes the reverse reaction and the reduction of thymine to 5,6-dihydrothymine (DHT). The protein is NAD-dependent dihydropyrimidine dehydrogenase subunit PreT (preT) of Salmonella typhimurium (strain LT2 / SGSC1412 / ATCC 700720).